The sequence spans 283 residues: uncharacterized protein (283 aa).

Polar residues predominate over residues 1–10; sequence MEVNKTTESL. Disordered regions lie at residues 1–96 and 255–283; these read MEVN…SGGN and DQEG…EAQI. Composition is skewed to basic and acidic residues over residues 14–34 and 44–81; these read KVEH…RDVK and SKQE…VSSR.

This sequence belongs to the chlamydial CPn_0705/CT_671/TC_0042 family.

This is an uncharacterized protein from Chlamydia muridarum (strain MoPn / Nigg).